The primary structure comprises 1405 residues: DNA-directed RNA polymerase subunit beta' (1405 aa).

4 residues coordinate Zn(2+): Cys-70, Cys-72, Cys-85, and Cys-88. Mg(2+)-binding residues include Asp-460, Asp-462, and Asp-464. Cys-815, Cys-890, Cys-897, and Cys-900 together coordinate Zn(2+).

The protein belongs to the RNA polymerase beta' chain family. The RNAP catalytic core consists of 2 alpha, 1 beta, 1 beta' and 1 omega subunit. When a sigma factor is associated with the core the holoenzyme is formed, which can initiate transcription. It depends on Mg(2+) as a cofactor. The cofactor is Zn(2+).

The enzyme catalyses RNA(n) + a ribonucleoside 5'-triphosphate = RNA(n+1) + diphosphate. Functionally, DNA-dependent RNA polymerase catalyzes the transcription of DNA into RNA using the four ribonucleoside triphosphates as substrates. This chain is DNA-directed RNA polymerase subunit beta', found in Xanthomonas campestris pv. campestris (strain B100).